The chain runs to 596 residues: Elongation factor 4 (596 aa).

The tr-type G domain maps to 2-183; it reads KNIRNFSIIA…AIVDRIPAPV (182 aa). GTP-binding positions include 14-19 and 130-133; these read DHGKST and NKID.

This sequence belongs to the TRAFAC class translation factor GTPase superfamily. Classic translation factor GTPase family. LepA subfamily.

It is found in the cell inner membrane. The enzyme catalyses GTP + H2O = GDP + phosphate + H(+). Functionally, required for accurate and efficient protein synthesis under certain stress conditions. May act as a fidelity factor of the translation reaction, by catalyzing a one-codon backward translocation of tRNAs on improperly translocated ribosomes. Back-translocation proceeds from a post-translocation (POST) complex to a pre-translocation (PRE) complex, thus giving elongation factor G a second chance to translocate the tRNAs correctly. Binds to ribosomes in a GTP-dependent manner. This is Elongation factor 4 from Sulfurimonas denitrificans (strain ATCC 33889 / DSM 1251) (Thiomicrospira denitrificans (strain ATCC 33889 / DSM 1251)).